Reading from the N-terminus, the 79-residue chain is Acyl carrier protein (79 aa).

The 76-residue stretch at 2–77 (SDIAERVKKI…DAVKFLEKNS (76 aa)) folds into the Carrier domain. O-(pantetheine 4'-phosphoryl)serine is present on serine 37.

Belongs to the acyl carrier protein (ACP) family. Post-translationally, 4'-phosphopantetheine is transferred from CoA to a specific serine of apo-ACP by AcpS. This modification is essential for activity because fatty acids are bound in thioester linkage to the sulfhydryl of the prosthetic group.

The protein localises to the cytoplasm. The protein operates within lipid metabolism; fatty acid biosynthesis. Its function is as follows. Carrier of the growing fatty acid chain in fatty acid biosynthesis. The chain is Acyl carrier protein from Methylobacterium radiotolerans (strain ATCC 27329 / DSM 1819 / JCM 2831 / NBRC 15690 / NCIMB 10815 / 0-1).